The following is a 244-amino-acid chain: Ribosomal RNA small subunit methyltransferase G (244 aa).

S-adenosyl-L-methionine is bound by residues glycine 79, phenylalanine 84, 130 to 131, and arginine 150; that span reads AE. Residues 221-244 form a disordered region; the sequence is KKPSPKRYPRKPGTPAKQPLTAPM.

This sequence belongs to the methyltransferase superfamily. RNA methyltransferase RsmG family.

It localises to the cytoplasm. Functionally, specifically methylates the N7 position of a guanine in 16S rRNA. This chain is Ribosomal RNA small subunit methyltransferase G, found in Lactiplantibacillus plantarum (strain ATCC BAA-793 / NCIMB 8826 / WCFS1) (Lactobacillus plantarum).